The following is a 321-amino-acid chain: Glycerol-3-phosphate phosphatase (321 aa).

The active-site Nucleophile is the D34. 3 residues coordinate Mg(2+): D34, D36, and D260. D36 acts as the Proton donor in catalysis.

Belongs to the HAD-like hydrolase superfamily. CbbY/CbbZ/Gph/YieH family. As to quaternary structure, homodimer. Requires Mg(2+) as cofactor. In terms of tissue distribution, detected in all tissues including red cells, lymphocytes and cultured fibroblasts (at protein level). The highest activities occur in skeletal muscle and cardiac muscle.

The enzyme catalyses O-phospho-L-tyrosyl-[protein] + H2O = L-tyrosyl-[protein] + phosphate. It catalyses the reaction sn-glycerol 1-phosphate + H2O = glycerol + phosphate. It carries out the reaction sn-glycerol 3-phosphate + H2O = glycerol + phosphate. Functionally, glycerol-3-phosphate phosphatase hydrolyzing glycerol-3-phosphate into glycerol. Thereby, regulates the cellular levels of glycerol-3-phosphate a metabolic intermediate of glucose, lipid and energy metabolism. Was also shown to have a 2-phosphoglycolate phosphatase activity and a tyrosine-protein phosphatase activity. However, their physiological relevance is unclear. In vitro, also has a phosphatase activity toward ADP, ATP, GDP and GTP. The chain is Glycerol-3-phosphate phosphatase from Homo sapiens (Human).